The chain runs to 825 residues: NT-3 growth factor receptor (825 aa).

A signal peptide spans 1-31 (MDVSLCPAKCSFWRIFLLGSVWLDYVGSVLA). 2 disulfide bridges follow: Cys32–Cys38 and Cys36–Cys45. The Extracellular segment spans residues 32–429 (CPANCVCSKT…TVTHKPEEDT (398 aa)). Residues Asn68, Asn72, and Asn79 are each glycosylated (N-linked (GlcNAc...) asparagine). LRR repeat units lie at residues 104-125 (GLQK…AFAK) and 128-149 (HLRY…LFQT). Residues Asn133 and Asn163 are each glycosylated (N-linked (GlcNAc...) asparagine). The region spanning 160–209 (NFFNCSCDIRWMQLWQEQGEAKLNSQSLYCISADGSQLPLFRMNISQCDL) is the LRRCT domain. Intrachain disulfides connect Cys164–Cys189 and Cys166–Cys207. Residues Asn203, Asn218, Asn232, Asn259, Asn267, Asn272, and Asn294 are each glycosylated (N-linked (GlcNAc...) asparagine). Ig-like C2-type domains lie at 210-300 (PEIS…VALT) and 309-382 (SLEE…NRQE). Cys231 and Cys284 are oxidised to a cystine. Cys320 and Cys362 are joined by a disulfide. Asn375 and Asn388 each carry an N-linked (GlcNAc...) asparagine glycan. Residues 430-453 (FGVSIAVGLAAFACVLLVVLFIMI) traverse the membrane as a helical segment. The Cytoplasmic portion of the chain corresponds to 454-825 (NKYGRRSKFG…ATPIYLDILG (372 aa)). Tyr516 carries the phosphotyrosine; by autocatalysis modification. Positions 538–814 (IVLKRELGEG…EIYKILHALG (277 aa)) constitute a Protein kinase domain. ATP-binding positions include 544–552 (LGEGAFGKV) and Lys572. Asp679 serves as the catalytic Proton acceptor. A phosphotyrosine; by autocatalysis mark is found at Tyr705, Tyr709, Tyr710, and Tyr820.

It belongs to the protein kinase superfamily. Tyr protein kinase family. Insulin receptor subfamily. As to quaternary structure, exists in a dynamic equilibrium between monomeric (low affinity) and dimeric (high affinity) structures. Binds SH2B2. Interacts with SQSTM1 and KIDINS220. Interacts with PTPRS. Interacts with MAPK8IP3/JIP3. Ligand-mediated auto-phosphorylation. Preferentially in the brain, low levels in the ovaries.

The protein localises to the membrane. The enzyme catalyses L-tyrosyl-[protein] + ATP = O-phospho-L-tyrosyl-[protein] + ADP + H(+). Its function is as follows. Receptor tyrosine kinase involved in nervous system and probably heart development. Upon binding of its ligand NTF3/neurotrophin-3, NTRK3 autophosphorylates and activates different signaling pathways, including the phosphatidylinositol 3-kinase/AKT and the MAPK pathways, that control cell survival and differentiation. The protein is NT-3 growth factor receptor (NTRK3) of Sus scrofa (Pig).